Consider the following 280-residue polypeptide: uncharacterized protein (280 aa).

Basic and acidic residues-rich tracts occupy residues 110-122, 167-177, 223-261, and 269-280; these read EKQAHDDHPERLQ, ATGEERAECGR, ARQHDQRGDRRKGEGDRQKHGDRRGRPDARKNADQRPQQ, and DVDRSKSCLEAE. Disordered regions lie at residues 110–137, 151–177, and 219–280; these read EKQAHDDHPERLQNRSVRQRNGDKKTEH, HRGERRSGNCQQQGRHATGEERAECGR, and TIID…LEAE.

This is an uncharacterized protein from Agrobacterium vitis (Rhizobium vitis).